A 121-amino-acid chain; its full sequence is Large ribosomal subunit protein uL14 (121 aa).

The protein belongs to the universal ribosomal protein uL14 family. As to quaternary structure, part of the 50S ribosomal subunit. Forms a cluster with proteins L3 and L19. In the 70S ribosome, L14 and L19 interact and together make contacts with the 16S rRNA in bridges B5 and B8.

In terms of biological role, binds to 23S rRNA. Forms part of two intersubunit bridges in the 70S ribosome. This chain is Large ribosomal subunit protein uL14, found in Prochlorococcus marinus (strain MIT 9515).